Consider the following 63-residue polypeptide: 2-hydroxymuconate tautomerase (63 aa).

The active-site Proton acceptor; via imino nitrogen is the Pro2.

This sequence belongs to the 4-oxalocrotonate tautomerase family. In terms of assembly, homohexamer.

The enzyme catalyses (2Z,4E)-2-hydroxyhexa-2,4-dienedioate = (3E)-2-oxohex-3-enedioate. It functions in the pathway aromatic compound metabolism; salicylate degradation. Its function is as follows. Catalyzes the ketonization of 2-hydroxymuconate stereoselectively to yield 2-oxo-3-hexenedioate. In Pseudomonas fluorescens, this protein is 2-hydroxymuconate tautomerase (nahJ).